Consider the following 552-residue polypeptide: MAGUK p55 subfamily member 2 (552 aa).

L27 domains lie at 8–59 (SESA…EETK) and 60–118 (LEAV…YETP). S42 is subject to Phosphoserine. Position 117 is a phosphothreonine (T117). At S121 the chain carries Phosphoserine. The region spanning 140–219 (MVGIRKTAGE…SVILKILPSY (80 aa)) is the PDZ domain. The region spanning 225–293 (PRQVFVKCHF…PSQLLEEKRK (69 aa)) is the SH3 domain. A Guanylate kinase-like domain is found at 350 to 537 (RKTLVLIGAQ…TFRELQTAME (188 aa)).

The protein belongs to the MAGUK family. As to quaternary structure, can homomultimerise. Interacts with CACNG2. Interacts (via the SH3-Guanylate kinase-like sub-module) with DLG4/PSD95 and DLGAP1/GKAP. Interacts (via the PDZ domain) with CADM1 (via C-terminus). Interacts with KCNN2/SK2 (via N-terminal domain). Interacts with SRC. In terms of processing, phosphorylated by SRC. Expressed in hippocampal neurons.

It is found in the cell projection. It localises to the dendrite. The protein localises to the postsynaptic density. The protein resides in the cytoplasm. Its subcellular location is the cytoskeleton. It is found in the membrane. In terms of biological role, postsynaptic MAGUK scaffold protein that links CADM1 cell adhesion molecules to core components of the postsynaptic density. In CA1 pyramidal neurons, required for synaptic KCNN2-containing channel function and long-term potentiation expression. Seems to negatively regulate SRC function in epithelial cells. The protein is MAGUK p55 subfamily member 2 of Rattus norvegicus (Rat).